We begin with the raw amino-acid sequence, 487 residues long: MPAGHGQTAMTREQQPPRFTLNCWADAAMASTATTARPTVAFAHLGCEKNRVDTEHMLGLLAQAGYGVSADEADAQVVVVNTCSFIQDARAESVRTLVDLAEQGKQIVIAGCLAQHFQEELLESLPEARAIVGTGDYQHIVEVLEQVEAGERVNRVSQVPTFVADENLPRYRTTSEAVAYLKVAEGCDYRCAFCIIPKLRGDQRSRPIESIVAEAQQLAAQGVKELILISQITTNYGLDLYGKPQLAELLRALGEVEIPWIRVHYAYPTGLTPEVLAAYREVPNVLPYLDLPLQHSHPEVLRAMNRPWQEGVNGQLLQRIREQLPDAVLRTTFIVGYPGETEEQFEHLLEFVQEQRFDHVGVFCFSPEDGTPAADLPNAVPAEVAEARRGRLMEAQQAISAERNGAWVGRIVDVLVEQENPSSGELIGRCLRFAPDVDGEVRIRAGSHGAAASAGTMVPVRITAADIYDLEGEVVGAQEMVDAVRHS.

In terms of domain architecture, MTTase N-terminal spans 38-149; it reads PTVAFAHLGC…IVEVLEQVEA (112 aa). Positions 47, 83, 112, 187, 191, and 194 each coordinate [4Fe-4S] cluster. The Radical SAM core domain occupies 173–402; the sequence is TTSEAVAYLK…MEAQQAISAE (230 aa). Positions 405–476 constitute a TRAM domain; sequence GAWVGRIVDV…IYDLEGEVVG (72 aa).

Belongs to the methylthiotransferase family. RimO subfamily. The cofactor is [4Fe-4S] cluster.

It is found in the cytoplasm. It carries out the reaction L-aspartate(89)-[ribosomal protein uS12]-hydrogen + (sulfur carrier)-SH + AH2 + 2 S-adenosyl-L-methionine = 3-methylsulfanyl-L-aspartate(89)-[ribosomal protein uS12]-hydrogen + (sulfur carrier)-H + 5'-deoxyadenosine + L-methionine + A + S-adenosyl-L-homocysteine + 2 H(+). Its function is as follows. Catalyzes the methylthiolation of an aspartic acid residue of ribosomal protein uS12. This is Ribosomal protein uS12 methylthiotransferase RimO from Synechococcus sp. (strain RCC307).